The primary structure comprises 286 residues: Phosphatidylserine decarboxylase proenzyme (286 aa).

Residues aspartate 90, histidine 147, and serine 252 each act as charge relay system; for autoendoproteolytic cleavage activity in the active site. Serine 252 (schiff-base intermediate with substrate; via pyruvic acid; for decarboxylase activity) is an active-site residue. Position 252 is a pyruvic acid (Ser); by autocatalysis (serine 252).

The protein belongs to the phosphatidylserine decarboxylase family. PSD-B subfamily. Prokaryotic type I sub-subfamily. As to quaternary structure, heterodimer of a large membrane-associated beta subunit and a small pyruvoyl-containing alpha subunit. Requires pyruvate as cofactor. Is synthesized initially as an inactive proenzyme. Formation of the active enzyme involves a self-maturation process in which the active site pyruvoyl group is generated from an internal serine residue via an autocatalytic post-translational modification. Two non-identical subunits are generated from the proenzyme in this reaction, and the pyruvate is formed at the N-terminus of the alpha chain, which is derived from the carboxyl end of the proenzyme. The autoendoproteolytic cleavage occurs by a canonical serine protease mechanism, in which the side chain hydroxyl group of the serine supplies its oxygen atom to form the C-terminus of the beta chain, while the remainder of the serine residue undergoes an oxidative deamination to produce ammonia and the pyruvoyl prosthetic group on the alpha chain. During this reaction, the Ser that is part of the protease active site of the proenzyme becomes the pyruvoyl prosthetic group, which constitutes an essential element of the active site of the mature decarboxylase.

The protein localises to the cell membrane. It catalyses the reaction a 1,2-diacyl-sn-glycero-3-phospho-L-serine + H(+) = a 1,2-diacyl-sn-glycero-3-phosphoethanolamine + CO2. Its pathway is phospholipid metabolism; phosphatidylethanolamine biosynthesis; phosphatidylethanolamine from CDP-diacylglycerol: step 2/2. Catalyzes the formation of phosphatidylethanolamine (PtdEtn) from phosphatidylserine (PtdSer). This chain is Phosphatidylserine decarboxylase proenzyme, found in Ectopseudomonas mendocina (strain ymp) (Pseudomonas mendocina).